The following is a 132-amino-acid chain: Small ribosomal subunit protein bS6 (132 aa).

It belongs to the bacterial ribosomal protein bS6 family.

Binds together with bS18 to 16S ribosomal RNA. This Chlorobium chlorochromatii (strain CaD3) protein is Small ribosomal subunit protein bS6.